We begin with the raw amino-acid sequence, 143 residues long: Flagellar assembly factor FliW (143 aa).

This sequence belongs to the FliW family. Interacts with translational regulator CsrA and flagellin(s).

It is found in the cytoplasm. Functionally, acts as an anti-CsrA protein, binds CsrA and prevents it from repressing translation of its target genes, one of which is flagellin. Binds to flagellin and participates in the assembly of the flagellum. This Clostridium botulinum (strain ATCC 19397 / Type A) protein is Flagellar assembly factor FliW.